Here is a 99-residue protein sequence, read N- to C-terminus: Cystatin (99 aa).

One can recognise a Cystatin domain in the interval 3 to 99 (GGLSPRSVSD…EEKLCGFQVW (97 aa)). The Secondary area of contact signature appears at 47 to 51 (QSVAG). Cys65 and Cys81 form a disulfide bridge.

Belongs to the cystatin family. Expressed by the venom gland.

It localises to the secreted. Functionally, inhibits various C1 cysteine proteases including cathepsin L (Ki is 0.1 nM), papain (Ki is 0.19 nM), cathepsin S (Ki is 1.2 nM), and cathepsin B (Ki is 2.5 nM). This protein has no toxic activity and its function in the venom is unknown. It may play a role as housekeeping or regulatory protein. The chain is Cystatin from Naja atra (Chinese cobra).